Here is a 301-residue protein sequence, read N- to C-terminus: Ribonuclease H2 subunit A (301 aa).

Met-1 is subject to N-acetylmethionine. Residues 28–251 (PCVLGVDEAG…AQAILEKEAE (224 aa)) enclose the RNase H type-2 domain. Residues Asp-34, Glu-35, and Asp-142 each coordinate a divalent metal cation. A Phosphothreonine modification is found at Thr-217. The span at 255–264 (WEDSEAEEDP) shows a compositional bias: acidic residues. The disordered stretch occupies residues 255–284 (WEDSEAEEDPERPGKITSYFSQGPQTCRPQ). Ser-258 carries the phosphoserine modification. A compositionally biased stretch (polar residues) spans 272–282 (SYFSQGPQTCR).

Belongs to the RNase HII family. Eukaryotic subfamily. As to quaternary structure, the RNase H2 complex is a heterotrimer composed of the catalytic subunit RNASEH2A and the non-catalytic subunits RNASEH2B and RNASEH2C. Mn(2+) is required as a cofactor. The cofactor is Mg(2+).

Its subcellular location is the nucleus. The enzyme catalyses Endonucleolytic cleavage to 5'-phosphomonoester.. Functionally, catalytic subunit of RNase HII, an endonuclease that specifically degrades the RNA of RNA:DNA hybrids. Participates in DNA replication, possibly by mediating the removal of lagging-strand Okazaki fragment RNA primers during DNA replication. Mediates the excision of single ribonucleotides from DNA:RNA duplexes. This chain is Ribonuclease H2 subunit A (Rnaseh2a), found in Mus musculus (Mouse).